The sequence spans 495 residues: Tripartite motif-containing protein 5 (495 aa).

Alanine 2 is subject to N-acetylalanine. The RING-type zinc finger occupies 15-60 (CPICLELLTEPLSLPCGHSFCQACITANHKKSMLYKEEERSCPVCR). Residue serine 87 is modified to Phosphoserine. The B box-type zinc-finger motif lies at 92–133 (QKVDHCARHGEKLLLFCQEDRKVICWLCERSQEHRGHHTFLM). 4 residues coordinate Zn(2+): cysteine 97, histidine 100, cysteine 119, and histidine 125. A coiled-coil region spans residues 137–177 (AQEYHVKLQTALEMLRQKQQEAEKLEADIREEKASWKIQID). The interval 187–200 (FEQLREILDWEESN) is required for interaction with GABARAP and for autophagy. Positions 283–495 (LKGMLDMFRE…VPMTLCSPSS (213 aa)) constitute a B30.2/SPRY domain.

This sequence belongs to the TRIM/RBCC family. Can form homodimers and homotrimers. In addition to lower-order dimerization, also exhibits a higher-order multimerization and both low- and high-order multimerizations are essential for its restriction activity. Interacts with BTBD1 and BTBD2. Interacts with PSMC4, PSMC5, PSMD7 and HSPA8/HSC70. Interacts (via B30.2/SPRY domain) with HSPA1A/B. Interacts with PSMC2, MAP3K7/TAK1, TAB2 and TAB3. Interacts with SQSTM1. Interacts with TRIM6 and TRIM34. Interacts with ULK1 (phosphorylated form), GABARAP, GABARAPL1, GABARAPL2, MAP1LC3A, MAP1LC3C and BECN1. In terms of processing, degraded in a proteasome-independent fashion in the absence of viral infection but in a proteasome-dependent fashion following exposure to restriction sensitive virus. Post-translationally, autoubiquitinated in a RING finger- and UBE2D2-dependent manner. Monoubiquitinated by TRIM21. Deubiquitinated by Yersinia YopJ. Ubiquitination may not lead to proteasomal degradation.

The protein localises to the cytoplasm. It localises to the nucleus. The enzyme catalyses S-ubiquitinyl-[E2 ubiquitin-conjugating enzyme]-L-cysteine + [acceptor protein]-L-lysine = [E2 ubiquitin-conjugating enzyme]-L-cysteine + N(6)-ubiquitinyl-[acceptor protein]-L-lysine.. The protein operates within protein modification; protein ubiquitination. Its function is as follows. Capsid-specific restriction factor that prevents infection from non-host-adapted retroviruses. Blocks viral replication early in the life cycle, after viral entry but before reverse transcription. In addition to acting as a capsid-specific restriction factor, also acts as a pattern recognition receptor that activates innate immune signaling in response to the retroviral capsid lattice. Binding to the viral capsid triggers its E3 ubiquitin ligase activity, and in concert with the heterodimeric ubiquitin conjugating enzyme complex UBE2V1-UBE2N (also known as UBC13-UEV1A complex) generates 'Lys-63'-linked polyubiquitin chains, which in turn are catalysts in the autophosphorylation of the MAP3K7/TAK1 complex (includes TAK1, TAB2, and TAB3). Activation of the MAP3K7/TAK1 complex by autophosphorylation results in the induction and expression of NF-kappa-B and MAPK-responsive inflammatory genes, thereby leading to an innate immune response in the infected cell. Plays a role in regulating autophagy through activation of autophagy regulator BECN1 by causing its dissociation from its inhibitors BCL2 and TAB2. This Erythrocebus patas (Red guenon) protein is Tripartite motif-containing protein 5 (TRIM5).